The primary structure comprises 173 residues: Signal peptidase complex catalytic subunit sec11 (173 aa).

Topologically, residues 1–15 are cytoplasmic; it reads MLGIADMQPRQLAAQ. A helical; Signal-anchor for type II membrane protein membrane pass occupies residues 16 to 36; sequence ILNFALVLSTAFMMWKGLSVV. The Lumenal segment spans residues 37 to 173; the sequence is SDSPSPIVVV…MGVMVVLQRE (137 aa). Active-site charge relay system residues include S50, H89, and D115. Residues 159-170 are C-terminal short (CTS) helix; the sequence is VMLGLMGVMVVL.

The protein belongs to the peptidase S26B family. Component of the signal peptidase complex (SPC) composed of a catalytic subunit SEC11 and three accessory subunits SPC1, SPC2 and SPC3. The complex induces a local thinning of the ER membrane which is used to measure the length of the signal peptide (SP) h-region of protein substrates. This ensures the selectivity of the complex towards h-regions shorter than 18-20 amino acids. SPC associates with the translocon complex.

It localises to the endoplasmic reticulum membrane. The enzyme catalyses Cleavage of hydrophobic, N-terminal signal or leader sequences from secreted and periplasmic proteins.. Catalytic component of the signal peptidase complex (SPC) which catalyzes the cleavage of N-terminal signal sequences from nascent proteins as they are translocated into the lumen of the endoplasmic reticulum. Specifically cleaves N-terminal signal peptides that contain a hydrophobic alpha-helix (h-region) shorter than 18-20 amino acids. This Pyrenophora tritici-repentis (strain Pt-1C-BFP) (Wheat tan spot fungus) protein is Signal peptidase complex catalytic subunit sec11 (sec11).